Consider the following 127-residue polypeptide: uncharacterized protein (127 aa).

The chain crosses the membrane as a helical span at residues 91-113 (IYLIVSIAVSILAIIAFFIFLML).

Its subcellular location is the membrane. This is an uncharacterized protein from Bacillus subtilis (strain 168).